The sequence spans 247 residues: Malonyl-[acyl-carrier protein] O-methyltransferase (247 aa).

This sequence belongs to the methyltransferase superfamily.

The catalysed reaction is malonyl-[ACP] + S-adenosyl-L-methionine = malonyl-[ACP] methyl ester + S-adenosyl-L-homocysteine. It participates in cofactor biosynthesis; biotin biosynthesis. In terms of biological role, converts the free carboxyl group of a malonyl-thioester to its methyl ester by transfer of a methyl group from S-adenosyl-L-methionine (SAM). It allows to synthesize pimeloyl-ACP via the fatty acid synthetic pathway. The polypeptide is Malonyl-[acyl-carrier protein] O-methyltransferase (Buchnera aphidicola subsp. Baizongia pistaciae (strain Bp)).